Reading from the N-terminus, the 845-residue chain is Protein SPA1-RELATED 3 (845 aa).

Residues 1-19 (MEGSSNSNSRGFNTSGVSD) show a composition bias toward polar residues. Disordered regions lie at residues 1–33 (MEGS…LTTR) and 139–158 (CSDS…KEIG). One can recognise a Protein kinase domain in the interval 1–297 (MEGSSNSNSR…MSDLLQSEFI (297 aa)). The stretch at 301 to 329 (RDNLEEREAAIELRDRIEEQESLLEFLLL) forms a coiled coil. WD repeat units follow at residues 532-571 (NSSN…NDNR), 581-621 (AGRS…LVTE), 624-664 (EHKK…SIGT), 666-706 (KTKA…IPLC), 710-748 (GHSK…SGIN), 757-796 (GHTN…PVMS), and 812-845 (DASQ…EMMT). Positions 685 to 699 (AFGSADHKVYYYDLR) match the DWD box motif.

Interacts with COP1 and CO.

Its subcellular location is the nucleus. In terms of biological role, repressor of photomorphogenesis in the light. Probably part of the COP1/SPA E3 ubiquitin-protein ligase complex. This chain is Protein SPA1-RELATED 3 (SPA3), found in Arabidopsis thaliana (Mouse-ear cress).